A 345-amino-acid chain; its full sequence is Dihydroorotate dehydrogenase (quinone) (345 aa).

FMN is bound by residues 65–69 and Thr89; that span reads AGLDK. Substrate is bound at residue Lys69. A substrate-binding site is contributed by 114-118; it reads NRMGF. 2 residues coordinate FMN: Asn142 and Asn175. Asn175 is a substrate binding site. Catalysis depends on Ser178, which acts as the Nucleophile. Asn180 is a substrate binding site. FMN contacts are provided by Lys220 and Thr248. Substrate is bound at residue 249-250; that stretch reads NT. FMN-binding positions include Gly271, Gly300, and 321–322; that span reads YT.

Belongs to the dihydroorotate dehydrogenase family. Type 2 subfamily. As to quaternary structure, monomer. FMN is required as a cofactor.

Its subcellular location is the cell membrane. The enzyme catalyses (S)-dihydroorotate + a quinone = orotate + a quinol. It participates in pyrimidine metabolism; UMP biosynthesis via de novo pathway; orotate from (S)-dihydroorotate (quinone route): step 1/1. Functionally, catalyzes the conversion of dihydroorotate to orotate with quinone as electron acceptor. This is Dihydroorotate dehydrogenase (quinone) from Burkholderia mallei (strain NCTC 10247).